Reading from the N-terminus, the 177-residue chain is ATP synthase subunit delta (177 aa).

This sequence belongs to the ATPase delta chain family. F-type ATPases have 2 components, F(1) - the catalytic core - and F(0) - the membrane proton channel. F(1) has five subunits: alpha(3), beta(3), gamma(1), delta(1), epsilon(1). F(0) has three main subunits: a(1), b(2) and c(10-14). The alpha and beta chains form an alternating ring which encloses part of the gamma chain. F(1) is attached to F(0) by a central stalk formed by the gamma and epsilon chains, while a peripheral stalk is formed by the delta and b chains.

The protein resides in the cell inner membrane. Its function is as follows. F(1)F(0) ATP synthase produces ATP from ADP in the presence of a proton or sodium gradient. F-type ATPases consist of two structural domains, F(1) containing the extramembraneous catalytic core and F(0) containing the membrane proton channel, linked together by a central stalk and a peripheral stalk. During catalysis, ATP synthesis in the catalytic domain of F(1) is coupled via a rotary mechanism of the central stalk subunits to proton translocation. Functionally, this protein is part of the stalk that links CF(0) to CF(1). It either transmits conformational changes from CF(0) to CF(1) or is implicated in proton conduction. The sequence is that of ATP synthase subunit delta from Pectobacterium atrosepticum (strain SCRI 1043 / ATCC BAA-672) (Erwinia carotovora subsp. atroseptica).